Consider the following 663-residue polypeptide: Translation factor GUF1 homolog, mitochondrial (663 aa).

The 187-residue stretch at Glu-64–Pro-250 folds into the tr-type G domain. Residues Ala-73–Ser-80, Asp-143–His-147, and Asn-197–Asp-200 contribute to the GTP site.

The protein belongs to the TRAFAC class translation factor GTPase superfamily. Classic translation factor GTPase family. LepA subfamily.

The protein localises to the mitochondrion inner membrane. It catalyses the reaction GTP + H2O = GDP + phosphate + H(+). Functionally, promotes mitochondrial protein synthesis. May act as a fidelity factor of the translation reaction, by catalyzing a one-codon backward translocation of tRNAs on improperly translocated ribosomes. Binds to mitochondrial ribosomes in a GTP-dependent manner. This chain is Translation factor GUF1 homolog, mitochondrial, found in Arabidopsis thaliana (Mouse-ear cress).